Here is a 327-residue protein sequence, read N- to C-terminus: 2-keto-3-deoxygluconate permease (327 aa).

Transmembrane regions (helical) follow at residues 10–30 (IPGG…TFSP), 42–62 (GMIT…GASI), 73–93 (KSGT…AIAS), 95–115 (IIPE…LALV), 139–159 (AGAF…IILG), 163–183 (IASF…VGFA), 199–219 (VQTL…LTVI), 224–244 (LLGI…LIIA), 254–274 (TAGI…VLIA), and 289–309 (SLVA…TSIW).

This sequence belongs to the KdgT transporter family.

The protein resides in the cell inner membrane. The enzyme catalyses 2-dehydro-3-deoxy-D-gluconate(in) + H(+)(in) = 2-dehydro-3-deoxy-D-gluconate(out) + H(+)(out). Functionally, catalyzes the proton-dependent uptake of 2-keto-3-deoxygluconate (KDG) into the cell. The chain is 2-keto-3-deoxygluconate permease from Escherichia coli O7:K1 (strain IAI39 / ExPEC).